The primary structure comprises 459 residues: Spermatogenesis-associated protein 1 (459 aa).

Over residues 193–205 the composition is skewed to basic and acidic residues; that stretch reads LKELPNKNQEEAG. The interval 193–213 is disordered; the sequence is LKELPNKNQEEAGGKATAEKS. 2 coiled-coil regions span residues 287 to 374 and 400 to 453; these read TDIS…YKKL and LIIQ…KKII.

As to quaternary structure, interacts with IFT20.

The protein localises to the cytoplasmic vesicle. It is found in the secretory vesicle. It localises to the acrosome. The sequence is that of Spermatogenesis-associated protein 1 (SPATA1) from Homo sapiens (Human).